Reading from the N-terminus, the 448-residue chain is Acetate kinase (448 aa).

A Mg(2+)-binding site is contributed by Asn-7. Lys-14 contacts ATP. A substrate-binding site is contributed by Arg-91. The active-site Proton donor/acceptor is the Asp-148. Residues His-208 to Gly-212 and Asp-283 to Arg-285 contribute to the ATP site. Residue Glu-388 coordinates Mg(2+).

Belongs to the acetokinase family. As to quaternary structure, homodimer. The cofactor is Mg(2+). Mn(2+) is required as a cofactor.

The protein localises to the cytoplasm. The enzyme catalyses acetate + ATP = acetyl phosphate + ADP. The protein operates within metabolic intermediate biosynthesis; acetyl-CoA biosynthesis; acetyl-CoA from acetate: step 1/2. In terms of biological role, catalyzes the formation of acetyl phosphate from acetate and ATP. Can also catalyze the reverse reaction. This is Acetate kinase from Treponema pallidum (strain Nichols).